The following is a 517-amino-acid chain: Cytochrome P450 1A1 (517 aa).

The interval 34-45 is mitochondrial targeting signal; it reads WQPRVPKGLKSP. The O-linked (GlcNAc) serine glycan is linked to S72. F229 lines the substrate pocket. C462 contributes to the heme binding site.

Belongs to the cytochrome P450 family. As to quaternary structure, interacts with cytosolic chaperones HSP70 and HSP90; this interaction is required for initial targeting to mitochondria. Interacts (via mitochondrial targeting signal) with TOMM40 (via N-terminus); this interaction is required for translocation across the mitochondrial outer membrane. The cofactor is heme.

It is found in the endoplasmic reticulum membrane. It localises to the mitochondrion inner membrane. The protein localises to the microsome membrane. The protein resides in the cytoplasm. It carries out the reaction an organic molecule + reduced [NADPH--hemoprotein reductase] + O2 = an alcohol + oxidized [NADPH--hemoprotein reductase] + H2O + H(+). It catalyses the reaction estrone + reduced [NADPH--hemoprotein reductase] + O2 = 2-hydroxyestrone + oxidized [NADPH--hemoprotein reductase] + H2O + H(+). The catalysed reaction is estrone + reduced [NADPH--hemoprotein reductase] + O2 = 4-hydroxyestrone + oxidized [NADPH--hemoprotein reductase] + H2O + H(+). The enzyme catalyses estrone + reduced [NADPH--hemoprotein reductase] + O2 = 6alpha-hydroxyestrone + oxidized [NADPH--hemoprotein reductase] + H2O + H(+). It carries out the reaction estrone + reduced [NADPH--hemoprotein reductase] + O2 = 15alpha-hydroxyestrone + oxidized [NADPH--hemoprotein reductase] + H2O + H(+). It catalyses the reaction estrone + reduced [NADPH--hemoprotein reductase] + O2 = 16alpha-hydroxyestrone + oxidized [NADPH--hemoprotein reductase] + H2O + H(+). The catalysed reaction is 17beta-estradiol + reduced [NADPH--hemoprotein reductase] + O2 = 2-hydroxy-17beta-estradiol + oxidized [NADPH--hemoprotein reductase] + H2O + H(+). The enzyme catalyses 17beta-estradiol + reduced [NADPH--hemoprotein reductase] + O2 = 4-hydroxy-17beta-estradiol + oxidized [NADPH--hemoprotein reductase] + H2O + H(+). It carries out the reaction 17beta-estradiol + reduced [NADPH--hemoprotein reductase] + O2 = 6alpha-hydroxy-17beta-estradiol + oxidized [NADPH--hemoprotein reductase] + H2O + H(+). It catalyses the reaction 17beta-estradiol + reduced [NADPH--hemoprotein reductase] + O2 = 7alpha-hydroxy-17beta-estradiol + oxidized [NADPH--hemoprotein reductase] + H2O + H(+). The catalysed reaction is 17beta-estradiol + reduced [NADPH--hemoprotein reductase] + O2 = 15alpha-hydroxy-17beta-estradiol + oxidized [NADPH--hemoprotein reductase] + H2O + H(+). The enzyme catalyses (5Z,8Z,11Z)-eicosatrienoate + reduced [NADPH--hemoprotein reductase] + O2 = 19-hydroxy-(5Z,8Z,11Z)-eicosatrienoate + oxidized [NADPH--hemoprotein reductase] + H2O + H(+). It carries out the reaction (5Z,8Z,11Z,14Z)-eicosatetraenoate + reduced [NADPH--hemoprotein reductase] + O2 = 16-hydroxy-(5Z,8Z,11Z,14Z)-eicosatetraenoate + oxidized [NADPH--hemoprotein reductase] + H2O + H(+). It catalyses the reaction (5Z,8Z,11Z,14Z)-eicosatetraenoate + reduced [NADPH--hemoprotein reductase] + O2 = 17-hydroxy-(5Z,8Z,11Z,14Z)-eicosatetraenoate + oxidized [NADPH--hemoprotein reductase] + H2O + H(+). The catalysed reaction is (5Z,8Z,11Z,14Z)-eicosatetraenoate + reduced [NADPH--hemoprotein reductase] + O2 = 18-hydroxy-(5Z,8Z,11Z,14Z)-eicosatetraenoate + oxidized [NADPH--hemoprotein reductase] + H2O + H(+). The enzyme catalyses (5Z,8Z,11Z,14Z)-eicosatetraenoate + reduced [NADPH--hemoprotein reductase] + O2 = 19-hydroxy-(5Z,8Z,11Z,14Z)-eicosatetraenoate + oxidized [NADPH--hemoprotein reductase] + H2O + H(+). It carries out the reaction (5Z,8Z,11Z,14Z,17Z)-eicosapentaenoate + reduced [NADPH--hemoprotein reductase] + O2 = 19-hydroxy-(5Z,8Z,11Z,14Z,17Z)-eicosapentaenoate + oxidized [NADPH--hemoprotein reductase] + H2O + H(+). It catalyses the reaction (5Z,8Z,11Z,14Z)-eicosatetraenoate + reduced [NADPH--hemoprotein reductase] + O2 = (8R,9S)-epoxy-(5Z,11Z,14Z)-eicosatrienoate + oxidized [NADPH--hemoprotein reductase] + H2O + H(+). The catalysed reaction is (5Z,8Z,11Z,14Z)-eicosatetraenoate + reduced [NADPH--hemoprotein reductase] + O2 = (11R,12S)-epoxy-(5Z,8Z,14Z)-eicosatrienoate + oxidized [NADPH--hemoprotein reductase] + H2O + H(+). The enzyme catalyses (5Z,8Z,11Z,14Z)-eicosatetraenoate + reduced [NADPH--hemoprotein reductase] + O2 = (14S,15R)-epoxy-(5Z,8Z,11Z)-eicosatrienoate + oxidized [NADPH--hemoprotein reductase] + H2O + H(+). It carries out the reaction (5Z,8Z,11Z,14Z)-eicosatetraenoate + reduced [NADPH--hemoprotein reductase] + O2 = (14R,15S)-epoxy-(5Z,8Z,11Z)-eicosatrienoate + oxidized [NADPH--hemoprotein reductase] + H2O + H(+). It catalyses the reaction (5Z,8Z,11Z,14Z,17Z)-eicosapentaenoate + reduced [NADPH--hemoprotein reductase] + O2 = (17R,18S)-epoxy-(5Z,8Z,11Z,14Z)-eicosatetraenoate + oxidized [NADPH--hemoprotein reductase] + H2O + H(+). The catalysed reaction is (4Z,7Z,10Z,13Z,16Z,19Z)-docosahexaenoate + reduced [NADPH--hemoprotein reductase] + O2 = (19S,20R)-epoxy-(4Z,7Z,10Z,13Z,16Z)-docosapentaenoate + oxidized [NADPH--hemoprotein reductase] + H2O + H(+). The enzyme catalyses (4Z,7Z,10Z,13Z,16Z,19Z)-docosahexaenoate + reduced [NADPH--hemoprotein reductase] + O2 = (19R,20S)-epoxy-(4Z,7Z,10Z,13Z,16Z)-docosapentaenoate + oxidized [NADPH--hemoprotein reductase] + H2O + H(+). It carries out the reaction all-trans-retinol + reduced [NADPH--hemoprotein reductase] + O2 = all-trans-retinal + oxidized [NADPH--hemoprotein reductase] + 2 H2O + H(+). It catalyses the reaction all-trans-retinal + reduced [NADPH--hemoprotein reductase] + O2 = all-trans-retinoate + oxidized [NADPH--hemoprotein reductase] + H2O + 2 H(+). The catalysed reaction is (13S)-hydroperoxy-(9Z,11E)-octadecadienoate = 13-oxo-(9Z,11E)-octadecadienoate + H2O. The enzyme catalyses (12S)-hydroperoxy-(5Z,8Z,10E,14Z)-eicosatetraenoate = 12-oxo-(5Z,8Z,10E,14Z)-eicosatetraenoate + H2O. It carries out the reaction (15S)-hydroperoxy-(5Z,8Z,11Z,13E)-eicosatetraenoate = 15-oxo-(5Z,8Z,11Z,13E)-eicosatetraenoate + H2O. It catalyses the reaction (5S)-hydroperoxy-(6E,8Z,11Z,14Z)-eicosatetraenoate = 5-oxo-(6E,8Z,11Z,14Z)-eicosatetraenoate + H2O. It participates in steroid hormone biosynthesis. Its pathway is lipid metabolism; fatty acid metabolism. The protein operates within cofactor metabolism; retinol metabolism. Its function is as follows. A cytochrome P450 monooxygenase involved in the metabolism of various endogenous substrates, including fatty acids, steroid hormones and vitamins. Mechanistically, uses molecular oxygen inserting one oxygen atom into a substrate, and reducing the second into a water molecule, with two electrons provided by NADPH via cytochrome P450 reductase (CPR; NADPH-ferrihemoprotein reductase). Catalyzes the hydroxylation of carbon-hydrogen bonds. Exhibits high catalytic activity for the formation of hydroxyestrogens from estrone (E1) and 17beta-estradiol (E2), namely 2-hydroxy E1 and E2, as well as D-ring hydroxylated E1 and E2 at the C15alpha and C16alpha positions. Displays different regioselectivities for polyunsaturated fatty acids (PUFA) hydroxylation. Catalyzes the epoxidation of double bonds of certain PUFA. Converts arachidonic acid toward epoxyeicosatrienoic acid (EET) regioisomers, 8,9-, 11,12-, and 14,15-EET, that function as lipid mediators in the vascular system. Displays an absolute stereoselectivity in the epoxidation of eicosapentaenoic acid (EPA) producing the 17(R),18(S) enantiomer. May play an important role in all-trans retinoic acid biosynthesis in extrahepatic tissues. Catalyzes two successive oxidative transformation of all-trans retinol to all-trans retinal and then to the active form all-trans retinoic acid. May also participate in eicosanoids metabolism by converting hydroperoxide species into oxo metabolites (lipoxygenase-like reaction, NADPH-independent). This Felis catus (Cat) protein is Cytochrome P450 1A1 (CYP1A1).